The chain runs to 227 residues: 7-cyano-7-deazaguanine synthase (227 aa).

7-17 (LSGGLDSSTIL) provides a ligand contact to ATP. Positions 191, 199, 202, and 205 each coordinate Zn(2+).

It belongs to the QueC family. It depends on Zn(2+) as a cofactor.

It catalyses the reaction 7-carboxy-7-deazaguanine + NH4(+) + ATP = 7-cyano-7-deazaguanine + ADP + phosphate + H2O + H(+). It participates in purine metabolism; 7-cyano-7-deazaguanine biosynthesis. Catalyzes the ATP-dependent conversion of 7-carboxy-7-deazaguanine (CDG) to 7-cyano-7-deazaguanine (preQ(0)). This Trichormus variabilis (strain ATCC 29413 / PCC 7937) (Anabaena variabilis) protein is 7-cyano-7-deazaguanine synthase.